The following is a 753-amino-acid chain: 5-methyltetrahydropteroyltriglutamate--homocysteine methyltransferase (753 aa).

5-methyltetrahydropteroyltri-L-glutamate is bound by residues 17–20 and Lys-117; that span reads RELK. L-homocysteine is bound by residues 431 to 433 and Glu-484; that span reads IGS. Residues 431–433 and Glu-484 contribute to the L-methionine site; that span reads IGS. Residues 515–516 and Trp-561 contribute to the 5-methyltetrahydropteroyltri-L-glutamate site; that span reads RC. Asp-599 provides a ligand contact to L-homocysteine. Asp-599 is an L-methionine binding site. Glu-605 serves as a coordination point for 5-methyltetrahydropteroyltri-L-glutamate. Residues His-641, Cys-643, and Glu-665 each contribute to the Zn(2+) site. His-694 functions as the Proton donor in the catalytic mechanism. Position 726 (Cys-726) interacts with Zn(2+).

The protein belongs to the vitamin-B12 independent methionine synthase family. Requires Zn(2+) as cofactor.

The catalysed reaction is 5-methyltetrahydropteroyltri-L-glutamate + L-homocysteine = tetrahydropteroyltri-L-glutamate + L-methionine. The protein operates within amino-acid biosynthesis; L-methionine biosynthesis via de novo pathway; L-methionine from L-homocysteine (MetE route): step 1/1. Functionally, catalyzes the transfer of a methyl group from 5-methyltetrahydrofolate to homocysteine resulting in methionine formation. The sequence is that of 5-methyltetrahydropteroyltriglutamate--homocysteine methyltransferase from Escherichia coli O139:H28 (strain E24377A / ETEC).